Here is a 1002-residue protein sequence, read N- to C-terminus: Inversin-B (1002 aa).

ANK repeat units follow at residues 9-39 (SLAS…VIDQ), 43-72 (LGRT…KVNR), 76-105 (SGRT…DCTH), 109-140 (CDIT…QVDA), 144-173 (RKQT…NIGI), 177-209 (EGKI…TESL), 216-246 (EGRT…NVAP), 250-279 (LFRT…SPNI), 284-313 (QGAT…VRDE), 317-346 (EGRT…KLEV), 352-381 (YGGT…QADA), 385-414 (MKHT…KVHL), 418-447 (DGRS…NPDA), 451-480 (EGRT…DPNI), 484-513 (NGRT…FPNQ), and 519-549 (ERYT…SIAA). Residues 486–494 (RTALHWSCN) carry the D-box 1 motif. In terms of domain architecture, IQ 1 spans 551–580 (QDIAAFKIQAVYKGHKVRRAFQERKNLLMK). Basic and acidic residues-rich tracts occupy residues 586 to 599 (KGAA…ENRQ), 609 to 621 (KQKD…RQNK), and 643 to 656 (AEDR…ENLE). Disordered stretches follow at residues 586 to 804 (KGAA…KGRR) and 862 to 886 (SAKT…SSSA). Composition is skewed to polar residues over residues 670–680 (QRITAQIQSSP) and 687–706 (NSIQ…SSPL). 2 stretches are compositionally biased toward basic and acidic residues: residues 733–763 (HQME…EERK) and 770–796 (QSSD…EGKK). Positions 959–967 (RKQLFQRKN) match the D-box 2 motif. The IQ 2 domain occupies 966-995 (KNHAATVIQKAWRTYWVRKSSCKTRHSRSQ).

Interacts with apc2. Binds calmodulin.

Its subcellular location is the cytoplasm. It localises to the cytoskeleton. Its function is as follows. Required for normal renal development and establishment of left-right axis. Probably acts as a molecular switch between different Wnt signaling pathways. Inhibits the canonical Wnt pathway by targeting cytoplasmic disheveled for degradation by the ubiquitin-proteasome. This suggests that it is required in renal development to oppose the repression of terminal differentiation of tubular epithelial cells by Wnt signaling. Plays a central role in convergent extension movements in gastrulating embryos, a processus regulated by Wnt signaling. In Xenopus laevis (African clawed frog), this protein is Inversin-B (invs-b).